The sequence spans 665 residues: Protein LOW PHOTOSYNTHETIC EFFICIENCY 1, chloroplastic (665 aa).

The transit peptide at 1–68 (MQALSILPLK…VSSNRKVLFL (68 aa)) directs the protein to the chloroplast. 13 PPR repeats span residues 145–179 (PLQV…KSES), 181–217 (GVIG…GIVP), 218–252 (NIVT…GFEP), 253–283 (NPIT…LREK), 309–344 (GRIC…GVRP), 345–375 (SREE…IRER), 380–414 (SLSV…GPEP), 422–456 (VVSH…GLKP), 457–491 (QRRH…GEKP), 492–526 (TVIS…GIEP), 527–561 (NLYA…GIEP), 562–596 (SVVT…NVEP), and 597–631 (NEIT…GLKL).

This sequence belongs to the PPR family. P subfamily. In terms of assembly, interacts with HCF173.

It is found in the plastid. Its subcellular location is the chloroplast thylakoid membrane. It localises to the chloroplast stroma. Functionally, required for light-regulated photosystem II (PSII) biogenesis and grana thylakoids formation by binding to the 5' UTR of PSII subunit mRNAs (e.g. psbJ, psbN and psbA) in a light-dependent manner through a redox-based mechanism, and facilitating the association of HCF173 with target mRNAs, which encodes PSII reaction center proteins (e.g. J, N and D1), thus regulating its expression by modulating ribosome loading. This Arabidopsis thaliana (Mouse-ear cress) protein is Protein LOW PHOTOSYNTHETIC EFFICIENCY 1, chloroplastic.